We begin with the raw amino-acid sequence, 287 residues long: Succinate dehydrogenase [ubiquinone] iron-sulfur subunit, mitochondrial (287 aa).

A mitochondrion-targeting transit peptide spans 1 to 23 (MISNVLKRASVLARSNGIQSAFY). A 2Fe-2S ferredoxin-type domain is found at 51 to 140 (FQVYRYNEET…GDTVKVYPLP (90 aa)). Cys101, Cys106, Cys109, and Cys121 together coordinate [2Fe-2S] cluster. The region spanning 186–216 (NRHKLDGLYECILCACCSTSCPSYWWSEGGD) is the 4Fe-4S ferredoxin-type domain. [4Fe-4S] cluster contacts are provided by Cys196, Cys199, and Cys202. Cys206 is a [3Fe-4S] cluster binding site. Trp211 contributes to the a ubiquinone binding site. [3Fe-4S] cluster-binding residues include Cys257 and Cys263. Cys267 is a binding site for [4Fe-4S] cluster.

The protein belongs to the succinate dehydrogenase/fumarate reductase iron-sulfur protein family. In terms of assembly, component of complex II composed of four subunits: the flavoprotein (FP) SDHA, iron-sulfur protein (IP) SDHB, and a cytochrome b composed of a large and a small subunit. [2Fe-2S] cluster is required as a cofactor. [3Fe-4S] cluster serves as cofactor. Requires [4Fe-4S] cluster as cofactor.

It is found in the mitochondrion inner membrane. The catalysed reaction is a quinone + succinate = fumarate + a quinol. Its pathway is carbohydrate metabolism; tricarboxylic acid cycle; fumarate from succinate (eukaryal route): step 1/1. Its function is as follows. Iron-sulfur protein (IP) subunit of succinate dehydrogenase (SDH) that is involved in complex II of the mitochondrial electron transport chain and is responsible for transferring electrons from succinate to ubiquinone (coenzyme Q). The sequence is that of Succinate dehydrogenase [ubiquinone] iron-sulfur subunit, mitochondrial (sdhB) from Dictyostelium discoideum (Social amoeba).